Consider the following 258-residue polypeptide: MKRILITNDDGFESLGLRALIEALRDIAQLTIVVPANEKSACGHSLTLTKPLRFVEIEDNFYKLEDGTPTDCVYLALSSLYPDGEKPDIIVSGINRGANMGEDITYSGTVAGAMEGAIYDIPSIAISQVCNSNCEETEMEVGYEQAKYVARDLVEKIFQQGWPAGHRRCLNVNVPPTKEFKGYKITRAGYRVYFNQAHLHRNPRGIEYWWLGLHPLDWIPGKERDCDFEAVKEGFVSITPIKADLTAYEEIPKLKSWL.

A divalent metal cation-binding residues include Asp9, Asp10, Ser40, and Asn95.

The protein belongs to the SurE nucleotidase family. Requires a divalent metal cation as cofactor.

It localises to the cytoplasm. The catalysed reaction is a ribonucleoside 5'-phosphate + H2O = a ribonucleoside + phosphate. Its function is as follows. Nucleotidase that shows phosphatase activity on nucleoside 5'-monophosphates. In Nitratiruptor sp. (strain SB155-2), this protein is 5'-nucleotidase SurE.